An 845-amino-acid polypeptide reads, in one-letter code: Disintegrin and metalloproteinase domain-containing protein 9 (845 aa).

The N-terminal stretch at 1–29 (MGPRALSPLASLRLRWLLACGLLGPVLEA) is a signal peptide. Topologically, residues 30–697 (GRPDLEQTVH…YNAKSTALRD (668 aa)) are extracellular. N-linked (GlcNAc...) asparagine glycans are attached at residues Asn-144, Asn-154, and Asn-231. The 195-residue stretch at 212 to 406 (RYVELFIVVD…KGGSCLLNIP (195 aa)) folds into the Peptidase M12B domain. Disulfide bonds link Cys-322-Cys-401, Cys-363-Cys-385, Cys-365-Cys-370, and Cys-473-Cys-493. Zn(2+) is bound at residue His-347. Glu-348 is an active-site residue. Zn(2+) is bound by residues His-351 and His-357. 3 N-linked (GlcNAc...) asparagine glycosylation sites follow: Asn-381, Asn-487, and Asn-636. The Disintegrin domain maps to 414–501 (APSCGNKLVD…FCPPDVFIQN (88 aa)). 3 disulfides stabilise this stretch: Cys-644–Cys-656, Cys-650–Cys-662, and Cys-664–Cys-673. An EGF-like domain is found at 644–698 (CDIQGKCHGHGVCNSNKNCHCEDGWAPPHCDTKGYGGSVDSGPTYNAKSTALRDG). Residues 698-718 (GLLVFFFLIVPLVAAAIFLFI) traverse the membrane as a helical segment. Topologically, residues 719-845 (KRDELRKTFR…PAPPLYSSLT (127 aa)) are cytoplasmic. The interval 729–845 (KKRSQMSDGR…PAPPLYSSLT (117 aa)) is disordered. Residues 734–745 (MSDGRNQANVSR) show a composition bias toward polar residues. The span at 783-794 (PGGPGVSRPPPG) shows a compositional bias: pro residues.

In terms of assembly, interacts with SH3GL2 and SNX9 through its cytoplasmic tail. Interacts with ITGA6. Zn(2+) serves as cofactor. Post-translationally, proteolytically cleaved in the trans-Golgi network before it reaches the plasma membrane to generate a mature protein. The removal of the pro-domain occurs via cleavage at two different sites. Processed most likely by a pro-protein convertase such as furin, at the boundary between the pro-domain and the catalytic domain. An additional upstream cleavage pro-protein convertase site (Arg-56/Glu-57) has an important role in the activation of ADAM9. In terms of processing, phosphorylation is induced in vitro by phorbol-12-myristate-13-acetate (PMA).

It is found in the cell membrane. Synthesized as an inactive form which is proteolytically cleaved to generate an active enzyme. Processing at the upstream site is particularly important for activation of the proenzyme, whereas processing at the boundary between the pro-domain and the catalytic domain does not appear to be essential. Inhibited by hydroxamic acid-based inhibitors. Metalloprotease that cleaves and releases a number of molecules with important roles in tumorigenesis and angiogenesis, such as TEK, KDR, EPHB4, CD40, VCAM1 and CDH5. May mediate cell-cell, cell-matrix interactions and regulate the motility of cells via interactions with integrins. This chain is Disintegrin and metalloproteinase domain-containing protein 9, found in Mus musculus (Mouse).